Consider the following 459-residue polypeptide: mRNA-capping enzyme subunit alpha (459 aa).

Lysine 70 (N6-GMP-lysine intermediate) is an active-site residue. Residues 415–459 are disordered; sequence MAGGSGRPLPSQSQNATLSTSKPVHSQPPSNDKEPKYVDEDDWSD. Residues 424-444 show a composition bias toward polar residues; sequence PSQSQNATLSTSKPVHSQPPS.

It belongs to the eukaryotic GTase family. In terms of assembly, heterodimer. The mRNA-capping enzyme is composed of two separate chains alpha and beta, respectively a mRNA guanylyltransferase and an mRNA 5'-triphosphate monophosphatase.

The protein resides in the nucleus. The catalysed reaction is a 5'-end diphospho-ribonucleoside in mRNA + GTP + H(+) = a 5'-end (5'-triphosphoguanosine)-ribonucleoside in mRNA + diphosphate. In terms of biological role, second step of mRNA capping. Transfer of the GMP moiety of GTP to the 5'-diphosphate terminus of RNA via a covalent enzyme-GMP reaction intermediate. This Saccharomyces cerevisiae (strain ATCC 204508 / S288c) (Baker's yeast) protein is mRNA-capping enzyme subunit alpha (CEG1).